A 324-amino-acid polypeptide reads, in one-letter code: Glyoxylate/hydroxypyruvate reductase B (324 aa).

Catalysis depends on residues R237 and E266. The Proton donor role is filled by H285.

The protein belongs to the D-isomer specific 2-hydroxyacid dehydrogenase family. GhrB subfamily. In terms of assembly, homodimer.

It localises to the cytoplasm. The enzyme catalyses glycolate + NADP(+) = glyoxylate + NADPH + H(+). The catalysed reaction is (R)-glycerate + NAD(+) = 3-hydroxypyruvate + NADH + H(+). It catalyses the reaction (R)-glycerate + NADP(+) = 3-hydroxypyruvate + NADPH + H(+). Catalyzes the NADPH-dependent reduction of glyoxylate and hydroxypyruvate into glycolate and glycerate, respectively. In Escherichia coli O6:K15:H31 (strain 536 / UPEC), this protein is Glyoxylate/hydroxypyruvate reductase B.